Reading from the N-terminus, the 579-residue chain is Fatty-acid amide hydrolase 1 (579 aa).

A helical membrane pass occupies residues 9–29 (ALPGASGVALACCFVAAAVAL). Residues 30 to 403 (RWSGRRTARG…GDFVDPCLGD (374 aa)) lie on the Cytoplasmic side of the membrane. Lysine 142 functions as the Charge relay system in the catalytic mechanism. Residues methionine 191, serine 217, and 238–241 (IGGS) contribute to the substrate site. Serine 217 acts as the Charge relay system in catalysis. The active-site Acyl-ester intermediate is serine 241. A Phosphoserine modification is found at serine 241. An intramembrane segment occupies 404–433 (LVSILKLPQWLKGLLAFLVKPLLPRLSAFL). Topologically, residues 434 to 579 (SNMKSRSAGK…RLMTPEKQSS (146 aa)) are cytoplasmic.

It belongs to the amidase family. As to quaternary structure, homodimer. Highly expressed in the brain, small intestine, pancreas, skeletal muscle and testis. Also expressed in the kidney, liver, lung, placenta and prostate.

It is found in the endomembrane system. The protein localises to the cytoplasm. It localises to the cytoskeleton. The enzyme catalyses N-(5Z,8Z,11Z,14Z-eicosatetraenoyl)-ethanolamine + H2O = ethanolamine + (5Z,8Z,11Z,14Z)-eicosatetraenoate. It catalyses the reaction (9Z)-octadecenamide + H2O = (9Z)-octadecenoate + NH4(+). It carries out the reaction 2-(5Z,8Z,11Z,14Z-eicosatetraenoyl)-glycerol + H2O = glycerol + (5Z,8Z,11Z,14Z)-eicosatetraenoate + H(+). The catalysed reaction is N-(9Z-octadecenoyl) ethanolamine + H2O = ethanolamine + (9Z)-octadecenoate. The enzyme catalyses N-hexadecanoylethanolamine + H2O = ethanolamine + hexadecanoate. It catalyses the reaction hexadecanamide + H2O = hexadecanoate + NH4(+). It carries out the reaction tetradecamide + H2O = tetradecanoate + NH4(+). The catalysed reaction is N-(9Z-octadecenoyl)-taurine + H2O = taurine + (9Z)-octadecenoate. The enzyme catalyses (9Z,12Z,15Z)-octadecatrienamide + H2O = (9Z,12Z,15Z)-octadecatrienoate + NH4(+). It catalyses the reaction (5Z,8Z,11Z,14Z)-eicosatetraenamide + H2O = (5Z,8Z,11Z,14Z)-eicosatetraenoate + NH4(+). It carries out the reaction (6Z)-octadecenamide + H2O = (6Z)-octadecenoate + NH4(+). The catalysed reaction is (15Z)-tetracosenamide + H2O = (15Z)-tetracosenoate + NH4(+). The enzyme catalyses (8Z,11Z,14Z)-eicosatrienamide + H2O = (8Z,11Z,14Z)-eicosatrienoate + NH4(+). It catalyses the reaction (11Z,14Z,17Z)-eicosatrienamide + H2O = (11Z,14Z,17Z)-eicosatrienoate + NH4(+). It carries out the reaction (11Z,14Z)-eicosadienamide + H2O = (11Z,14Z)-eicosadienoate + NH4(+). The catalysed reaction is (9Z,12Z)-octadecadienamide + H2O = (9Z,12Z)-octadecadienoate + NH4(+). The enzyme catalyses 1-O-methyl-(5Z,8Z,11Z,14Z)-eicosatetraenoate + H2O = methanol + (5Z,8Z,11Z,14Z)-eicosatetraenoate + H(+). It catalyses the reaction (11Z)-eicosenamide + H2O = (11Z)-eicosenoate + NH4(+). It carries out the reaction N-(9Z-hexadecenoyl) ethanolamine + H2O = (9Z)-hexadecenoate + ethanolamine. The catalysed reaction is N-octadecanoyl ethanolamine + H2O = octadecanoate + ethanolamine. The enzyme catalyses N-docosanoyl-ethanolamine + H2O = docosanoate + ethanolamine. It catalyses the reaction N-tetracosanoyl-taurine + H2O = tetracosanoate + taurine. It carries out the reaction N-(15Z-tetracosenoyl)-ethanolamine + H2O = (15Z)-tetracosenoate + ethanolamine. The catalysed reaction is N-docosanoyl-taurine + H2O = docosanoate + taurine. The enzyme catalyses N-(15Z-tetracosenoyl)-taurine + H2O = (15Z)-tetracosenoate + taurine. It catalyses the reaction N-tricosanoyl-taurine + H2O = tricosanoate + taurine. It carries out the reaction (9Z)-octadecenoate + glycine = N-(9Z-octadecenoyl)glycine + H2O. The catalysed reaction is N-(5Z,8Z,11Z,14Z)-eicosatetraenoyl-glycine + H2O = (5Z,8Z,11Z,14Z)-eicosatetraenoate + glycine. The enzyme catalyses N-(5Z,8Z,11Z,14Z-eicosatetraenoyl)-L-serine + H2O = (5Z,8Z,11Z,14Z)-eicosatetraenoate + L-serine. Its activity is regulated as follows. Inhibited by O-aryl carbamates and alpha-keto heterocycles. Inhibited by trifluoromethyl ketone. Its function is as follows. Catalyzes the hydrolysis of endogenous amidated lipids like the sleep-inducing lipid oleamide ((9Z)-octadecenamide), the endocannabinoid anandamide (N-(5Z,8Z,11Z,14Z-eicosatetraenoyl)-ethanolamine), as well as other fatty amides, to their corresponding fatty acids, thereby regulating the signaling functions of these molecules. Hydrolyzes polyunsaturated substrate anandamide preferentially as compared to monounsaturated substrates. It can also catalyze the hydrolysis of the endocannabinoid 2-arachidonoylglycerol (2-(5Z,8Z,11Z,14Z-eicosatetraenoyl)-glycerol). FAAH cooperates with PM20D1 in the hydrolysis of amino acid-conjugated fatty acids such as N-fatty acyl glycine and N-fatty acyl-L-serine, thereby acting as a physiological regulator of specific subsets of intracellular, but not of extracellular, N-fatty acyl amino acids. The sequence is that of Fatty-acid amide hydrolase 1 (FAAH) from Homo sapiens (Human).